Consider the following 258-residue polypeptide: Capsid protein (258 aa).

The Bipartite nuclear localization signal signature appears at 3-20 (KRPGDIIISTPGSKVRRR). Residues 41-55 (RKRAWVNRPMYRKPT) carry the Nuclear localization signal motif. A zinc finger lies at 69–86 (CEGPCKVQSFEQRDDVKH). A Nuclear export signal motif is present at residues 102–123 (LTHRVGKRFCIKSIYILGKIWL). The short motif at 202 to 249 (KRFYRLNHHVTYNHQEAGKYENHTENALLLYMACTHASNPVYATLKIR) is the Bipartite nuclear localization signal element.

It belongs to the geminiviridae capsid protein family. As to quaternary structure, homomultimer. Binds to single-stranded and double-stranded viral DNA. Interacts (via nuclear localization signals) with host importin alpha-1a.

It is found in the virion. The protein localises to the host nucleus. Encapsidates the viral DNA into characteristic twinned ('geminate') particles. Binds the genomic viral ssDNA and shuttles it into and out of the cell nucleus. The CP of bipartite geminiviruses is not required for cell-to-cell or systemic movement. The chain is Capsid protein from African cassava mosaic virus (isolate West Kenyan 844) (ACMV).